Consider the following 172-residue polypeptide: Large ribosomal subunit protein uL10 (172 aa).

This sequence belongs to the universal ribosomal protein uL10 family. In terms of assembly, part of the ribosomal stalk of the 50S ribosomal subunit. The N-terminus interacts with L11 and the large rRNA to form the base of the stalk. The C-terminus forms an elongated spine to which L12 dimers bind in a sequential fashion forming a multimeric L10(L12)X complex.

Its function is as follows. Forms part of the ribosomal stalk, playing a central role in the interaction of the ribosome with GTP-bound translation factors. This is Large ribosomal subunit protein uL10 from Rhodospirillum rubrum (strain ATCC 11170 / ATH 1.1.1 / DSM 467 / LMG 4362 / NCIMB 8255 / S1).